Consider the following 495-residue polypeptide: NADH-ubiquinone oxidoreductase chain 4 (495 aa).

The next 15 membrane-spanning stretches (helical) occupy residues 9 to 29 (YFDL…LLFI), 39 to 59 (LIGL…WIQF), 89 to 109 (LSLF…LVGW), 118 to 138 (EYII…CMLD), 139 to 159 (LLLF…IIGV), 173 to 193 (FFLY…LILL), 214 to 234 (ILLW…VPVH), 245 to 265 (PTAG…YGFL), 272 to 292 (FPEA…IAII), 313 to 333 (VAHM…GIGG), 335 to 355 (ILLM…VGVL), 367 to 387 (YGGL…FTLA), 388 to 408 (NMSL…VGAF), 413 to 433 (LVAT…LWLY), and 457 to 477 (VFIF…PKVF).

Belongs to the complex I subunit 4 family.

The protein resides in the mitochondrion membrane. The catalysed reaction is a ubiquinone + NADH + 5 H(+)(in) = a ubiquinol + NAD(+) + 4 H(+)(out). Functionally, core subunit of the mitochondrial membrane respiratory chain NADH dehydrogenase (Complex I) that is believed to belong to the minimal assembly required for catalysis. Complex I functions in the transfer of electrons from NADH to the respiratory chain. The immediate electron acceptor for the enzyme is believed to be ubiquinone. The protein is NADH-ubiquinone oxidoreductase chain 4 (ND4) of Triticum aestivum (Wheat).